Reading from the N-terminus, the 319-residue chain is Malate dehydrogenase (319 aa).

NAD(+) contacts are provided by residues 10–15 and aspartate 34; that span reads GAGNIG. Positions 83 and 89 each coordinate substrate. Residues asparagine 96 and 119-121 contribute to the NAD(+) site; that span reads ITN. Substrate contacts are provided by asparagine 121 and arginine 152. Histidine 176 serves as the catalytic Proton acceptor.

Belongs to the LDH/MDH superfamily. MDH type 3 family.

The catalysed reaction is (S)-malate + NAD(+) = oxaloacetate + NADH + H(+). Its function is as follows. Catalyzes the reversible oxidation of malate to oxaloacetate. The protein is Malate dehydrogenase of Francisella tularensis subsp. holarctica (strain FTNF002-00 / FTA).